The chain runs to 514 residues: Putative transposase y4uI (514 aa).

An HTH IS408-type domain is found at 11–93; that stretch reads VREILKLRLD…PDWSAVAREL (83 aa). The Integrase catalytic domain occupies 128–317; the sequence is HGRLPLVMRQ…TRRALFDELD (190 aa).

It belongs to the transposase IS21/IS408/IS1162 family.

In Sinorhizobium fredii (strain NBRC 101917 / NGR234), this protein is Putative transposase y4uI.